Reading from the N-terminus, the 374-residue chain is DNA replication and repair protein RecF (374 aa).

Residue 30 to 37 (GNNAQGKS) coordinates ATP.

The protein belongs to the RecF family.

Its subcellular location is the cytoplasm. The RecF protein is involved in DNA metabolism; it is required for DNA replication and normal SOS inducibility. RecF binds preferentially to single-stranded, linear DNA. It also seems to bind ATP. The protein is DNA replication and repair protein RecF of Nostoc punctiforme (strain ATCC 29133 / PCC 73102).